A 64-amino-acid polypeptide reads, in one-letter code: Small ribosomal subunit protein eS17 (64 aa).

Belongs to the eukaryotic ribosomal protein eS17 family.

The sequence is that of Small ribosomal subunit protein eS17 from Methanococcoides burtonii (strain DSM 6242 / NBRC 107633 / OCM 468 / ACE-M).